The sequence spans 115 residues: Protamine-2 (115 aa).

The tract at residues 1-115 is disordered; that stretch reads MVRCHVKSPT…RRRRRCGRQL (115 aa). A Phosphoserine modification is found at Ser8. Positions 24–38 are enriched in basic and acidic residues; sequence ETEHPDQARELRPED. Basic residues-rich tracts occupy residues 44–79 and 102–115; these read RTHR…RRRG and RRMR…GRQL.

The protein belongs to the protamine P2 family. Interacts with TDRP. Proteolytic processing into mature chains is required for histone eviction during spermatogenesis. Transition proteins (TNP1 and TNP2) are required for processing. In terms of tissue distribution, testis.

It is found in the nucleus. The protein resides in the chromosome. In terms of biological role, protamines substitute for histones in the chromatin of sperm during the haploid phase of spermatogenesis. They compact sperm DNA into a highly condensed, stable and inactive complex. The sequence is that of Protamine-2 (PRM2) from Bos taurus (Bovine).